Consider the following 185-residue polypeptide: Ribosome-recycling factor (185 aa).

Belongs to the RRF family.

The protein resides in the cytoplasm. Responsible for the release of ribosomes from messenger RNA at the termination of protein biosynthesis. May increase the efficiency of translation by recycling ribosomes from one round of translation to another. The polypeptide is Ribosome-recycling factor (Corynebacterium diphtheriae (strain ATCC 700971 / NCTC 13129 / Biotype gravis)).